The sequence spans 74 residues: Protein sok (74 aa).

Residues 26 to 45 (TQHGNKPPSRHEAESLKRRA) are disordered.

The polypeptide is Protein sok (sok) (Escherichia coli).